The following is a 495-amino-acid chain: Ubiquinone biosynthesis monooxygenase COQ6, mitochondrial (495 aa).

Belongs to the UbiH/COQ6 family. As to quaternary structure, component of a multi-subunit COQ enzyme complex. Requires FAD as cofactor.

The protein resides in the mitochondrion inner membrane. It catalyses the reaction a 4-hydroxy-3-(all-trans-polyprenyl)benzoate + 2 reduced [2Fe-2S]-[ferredoxin] + O2 + 2 H(+) = a 3,4-dihydroxy-5-(all-trans-polyprenyl)benzoate + 2 oxidized [2Fe-2S]-[ferredoxin] + H2O. It carries out the reaction a 2-methoxy-6-(all-trans-polyprenyl)phenol + 2 reduced [2Fe-2S]-[ferredoxin] + O2 + 2 H(+) = a 2-methoxy-6-(all-trans-polyprenyl)benzene-1,4-diol + 2 oxidized [2Fe-2S]-[ferredoxin] + H2O. It functions in the pathway cofactor biosynthesis; ubiquinone biosynthesis. In terms of biological role, FAD-dependent monooxygenase required for two non-consecutive steps during ubiquinone biosynthesis. Required for the C5-ring hydroxylation during ubiquinone biosynthesis by catalyzing the hydroxylation of 4-hydroxy-3-(all-trans-polyprenyl)benzoic acid to 3,4-dihydroxy-5-(all-trans-polyprenyl)benzoic acid. Also acts downstream of coq4, for the C1-hydroxylation during ubiquinone biosynthesis by catalyzing the hydroxylation of 2-methoxy-6-(all-trans-polyprenyl)phenol to 2-methoxy-6-(all-trans-polyprenyl)benzene-1,4-diol. The electrons required for the hydroxylation reaction are funneled indirectly to coq6 from NADPH via a ferredoxin/ferredoxin reductase system. The protein is Ubiquinone biosynthesis monooxygenase COQ6, mitochondrial of Dictyostelium discoideum (Social amoeba).